Consider the following 796-residue polypeptide: Polyribonucleotide nucleotidyltransferase (796 aa).

Mg(2+)-binding residues include aspartate 490 and aspartate 496. Positions 557 to 616 (PRIESIFINKDKIRNVIGSGGKNIRDICEKTGAKIEIIQDGTVMIYAVNNEAVEYAKSMI) constitute a KH domain. Residues 626–693 (GKVFEGTVVE…DREHVQLSMR (68 aa)) enclose the S1 motif domain. Over residues 714–736 (SFSDDSSSSGTSSSGSSFKESYS) the composition is skewed to low complexity. Residues 714–796 (SFSDDSSSSG…HEVPRKPRFF (83 aa)) are disordered. Positions 740 to 755 (HGSHEKRRSGGSRSSR) are enriched in basic residues. The span at 771–784 (SDFGNNNRSFSNSR) shows a compositional bias: low complexity. The segment covering 785–796 (NGHEVPRKPRFF) has biased composition (basic and acidic residues).

The protein belongs to the polyribonucleotide nucleotidyltransferase family. It depends on Mg(2+) as a cofactor.

Its subcellular location is the cytoplasm. The enzyme catalyses RNA(n+1) + phosphate = RNA(n) + a ribonucleoside 5'-diphosphate. In terms of biological role, involved in mRNA degradation. Catalyzes the phosphorolysis of single-stranded polyribonucleotides processively in the 3'- to 5'-direction. This Ehrlichia canis (strain Jake) protein is Polyribonucleotide nucleotidyltransferase.